Consider the following 527-residue polypeptide: Exodeoxyribonuclease 7 large subunit (527 aa).

The disordered stretch occupies residues 499-527 (AGEEGAPPPAAPKKRASRPVVPTKQGSLF).

The protein belongs to the XseA family. As to quaternary structure, heterooligomer composed of large and small subunits.

It localises to the cytoplasm. It catalyses the reaction Exonucleolytic cleavage in either 5'- to 3'- or 3'- to 5'-direction to yield nucleoside 5'-phosphates.. Bidirectionally degrades single-stranded DNA into large acid-insoluble oligonucleotides, which are then degraded further into small acid-soluble oligonucleotides. This chain is Exodeoxyribonuclease 7 large subunit, found in Sinorhizobium fredii (strain NBRC 101917 / NGR234).